The primary structure comprises 652 residues: Trypanothione synthetase (652 aa).

Positions Ser-34 to Ile-174 constitute a Peptidase C51 domain. An ATP-binding site is contributed by Arg-328–Asp-330. Mg(2+) contacts are provided by Asp-330, Glu-344, and Asn-346. ATP is bound by residues Lys-513, Lys-548, Gly-555, Gln-583, and Ile-618 to Thr-620.

In the C-terminal section; belongs to the glutathionylspermidine synthase preATP-grasp family. Mg(2+) serves as cofactor. In terms of processing, the N-terminus is blocked.

The enzyme catalyses spermidine + glutathione + ATP = glutathionylspermidine + ADP + phosphate + H(+). It catalyses the reaction glutathionylspermidine + glutathione + ATP = trypanothione + ADP + phosphate + H(+). In terms of biological role, conjugates glutathione (gamma-Glu-Cys-Gly) and glutathionylspermidine to form trypanothione (N(1),N(8)-bis(glutathionyl)spermidine), which is involved in maintaining intracellular thiol redox and in defense against oxidants. This chain is Trypanothione synthetase (TRS), found in Crithidia fasciculata.